The chain runs to 1198 residues: Fibronectin type-III domain-containing protein 3a (1198 aa).

A compositionally biased stretch (basic and acidic residues) spans 189 to 201 (KLKDRHGTQKDKL). A disordered region spans residues 189-256 (KLKDRHGTQK…SQTDVEIEEK (68 aa)). A compositionally biased stretch (low complexity) spans 229–247 (GISTGSTKSKSVGKGKSNS). Fibronectin type-III domains are found at residues 269 to 370 (NIAK…TMSC), 374 to 466 (APNL…TSGT), 470 to 563 (TPAS…TCPD), 567 to 661 (APSK…TPAV), 665 to 758 (PCQP…TAPG), 762 to 852 (QCKP…TPAS), 864 to 951 (SEDE…TKPL), 952 to 1045 (PPDP…TPKS), and 1046 to 1151 (VPAA…TEPP). The disordered stretch occupies residues 553-574 (SETVDYTTCPDKPGAPSKPSVK). Residues 1172-1192 (VCAAVILALFAIFSILIAVII) form a helical membrane-spanning segment.

Belongs to the FNDC3 family.

It is found in the golgi apparatus membrane. The sequence is that of Fibronectin type-III domain-containing protein 3a (FNDC3A) from Gallus gallus (Chicken).